The chain runs to 306 residues: Glycine--tRNA ligase alpha subunit (306 aa).

It belongs to the class-II aminoacyl-tRNA synthetase family. In terms of assembly, tetramer of two alpha and two beta subunits.

It localises to the cytoplasm. The catalysed reaction is tRNA(Gly) + glycine + ATP = glycyl-tRNA(Gly) + AMP + diphosphate. The chain is Glycine--tRNA ligase alpha subunit from Aliivibrio fischeri (strain ATCC 700601 / ES114) (Vibrio fischeri).